Reading from the N-terminus, the 142-residue chain is MAKKVQAYVKLQVAAGMANPSPPVGPALGQQGVNIMEFCKAFNARTESLEKGLPIPVVITVYADRSFTFVTKTPPAAVLLKKAVGIKSGSGKPNKDKVGTVTQEQLRQIAETKAADMTGATIETKMKSIAGTARSMGLIVEE.

Belongs to the universal ribosomal protein uL11 family. In terms of assembly, part of the ribosomal stalk of the 50S ribosomal subunit. Interacts with L10 and the large rRNA to form the base of the stalk. L10 forms an elongated spine to which L12 dimers bind in a sequential fashion forming a multimeric L10(L12)X complex. One or more lysine residues are methylated.

Its function is as follows. Forms part of the ribosomal stalk which helps the ribosome interact with GTP-bound translation factors. In Haemophilus ducreyi (strain 35000HP / ATCC 700724), this protein is Large ribosomal subunit protein uL11.